The following is a 1659-amino-acid chain: Daxx-like protein (1659 aa).

2 disordered regions span residues 1 to 25 (MSASVICVDLSSESDEESPAKRRRL) and 265 to 336 (QLQQ…VRSL). Residues 438–469 (LGQLQQEQQKILGQLQQQKQQQQQQQKKILGQ) are a coiled coil. Composition is skewed to low complexity over residues 506-520 (SVGQLQQQQPHQSQQ), 528-542 (KQQPQQQKKISVGQF), and 600-625 (GQLQRQTQQQQKTSAGQFQQQPQQQQ). 7 disordered regions span residues 506-542 (SVGQLQQQQPHQSQQKNSMVHVKQQPQQQKKISVGQF), 600-645 (GQLQ…TLAG), 658-713 (SAGQ…MPQK), 872-894 (TLPFRSSQRKTSEAPMTSTHVQG), 924-952 (LPPTTSITPQLTPTTTPPPAGPSAAVQQQ), 1023-1060 (VESPPTTPPTDKPEPERGPMTVEKSSIKPMATDKQSRA), and 1536-1555 (FKIADDGDDSEEESDSEDDD). Residues 626–635 (KISAGQLQEH) are compositionally biased toward polar residues. Composition is skewed to low complexity over residues 636 to 645 (SQQQQKTLAG) and 658 to 698 (SAGQ…QPQQ). Polar residues-rich tracts occupy residues 699 to 711 (RTSAGLLQQQQMP) and 885 to 894 (APMTSTHVQG). Positions 870 to 1659 (ARTLPFRSSQ…DQIIISDEES (790 aa)) are necessary for interaction with His3.3A and His3.3B. The span at 924 to 937 (LPPTTSITPQLTPT) shows a compositional bias: low complexity. The span at 1541 to 1555 (DGDDSEEESDSEDDD) shows a compositional bias: acidic residues.

In terms of assembly, interacts with p53 (via C-terminus). Interacts (via C-terminus) with His3.3A and His3.3B. Interacts with asf1. As to expression, ubiquitously expressed with higher levels in the head (at protein level). Expressed in the germ line, with prominent expression in primary spermatocytes and meiotic spermatocytes (at protein level). In ovaries, expressed in nurse cells and in the germinal vesicle of the ovarian follicle at stage 10 (at protein level).

The protein resides in the cytoplasm. The protein localises to the cytosol. It is found in the nucleus. Its subcellular location is the chromosome. Its function is as follows. Transcription regulator. Acts as a histone chaperone that facilitates deposition of histone H3.3. Has a role in chromatin remodeling together with asf1 and XNP. Has role in the transcriptional apoptotic response to oxidative and UV stress. The sequence is that of Daxx-like protein from Drosophila melanogaster (Fruit fly).